Reading from the N-terminus, the 494-residue chain is Arp2/3 complex-activating protein rickA (494 aa).

The interval 312–494 is disordered; that stretch reads PLENNIPPPP…RNSQKPSFVR (183 aa). A compositionally biased stretch (pro residues) spans 317-357; sequence IPPPPPPPPPLPDNNIPPPPPPPPPLPDNNIPPPPPPPPMA. In terms of domain architecture, WH2 spans 383–400; sequence DTSDLMREIAGPKKLKKV. Positions 421–454 are central and acidic domains; the sequence is VNKPSGLESIFARRVAIEMSDSSSSESDSGNWSD. Low complexity predominate over residues 440–456; sequence SDSSSSESDSGNWSDVS. Residues 477-494 show a composition bias toward polar residues; sequence THAQKINNRNSQKPSFVR.

The protein localises to the cell surface. Its function is as follows. Recruits and activates the Arp2/3 complex, which in turn leads to actin polymerization, promoting Rickettsia motility during infection. The sequence is that of Arp2/3 complex-activating protein rickA (rickA) from Rickettsia rickettsii.